A 911-amino-acid chain; its full sequence is Inter-alpha-trypsin inhibitor heavy chain H1 (911 aa).

A signal peptide spans 1-27 (MDGAMGPRGLLLCMYLVSLLILQAMPA). Positions 28–34 (LGSATGR) are excised as a propeptide. A VIT domain is found at 37 to 166 (SSEKRQAVDT…KVTFQLTYEE (130 aa)). Cysteine 60 carries an S-linked (Hex...) cysteine glycan. Serine 129 is subject to Phosphoserine. The Phagocytosis uptake signal signature appears at 181–184 (VKPK). Intrachain disulfides connect cysteine 244-cysteine 247 and cysteine 268-cysteine 540. Asparagine 285 is a glycosylation site (N-linked (GlcNAc...) (complex) asparagine). A VWFA domain is found at 290-450 (NKNVVFVIDI…FNFLEVMSME (161 aa)). Positions 387-911 (SLPELSNHAS…YTDYIVPDIF (525 aa)) are hyaluronan-binding. Threonine 402 and threonine 407 each carry phosphothreonine. Residue asparagine 588 is glycosylated (N-linked (GlcNAc...) (complex) asparagine). Threonine 653 carries O-linked (GalNAc...) threonine glycosylation. Aspartate 672 carries the post-translational modification Aspartate 1-(chondroitin 4-sulfate)-ester. The propeptide occupies 673–911 (PHFIIHVPQK…YTDYIVPDIF (239 aa)). N-linked (GlcNAc...) asparagine glycosylation occurs at asparagine 750.

This sequence belongs to the ITIH family. In terms of assembly, I-alpha-I plasma protease inhibitors are assembled from one or two heavy chains (HC) and one light chain, bikunin. Inter-alpha-inhibitor (I-alpha-I) is composed of ITIH1/HC1, ITIH2/HC2 and bikunin. Interacts with TNFAIP6 (via Link and CUB domains). Post-translationally, heavy chains are linked to bikunin via chondroitin 4-sulfate esterified to the alpha-carboxyl of the C-terminal aspartate after propeptide cleavage. The S-linked glycan is composed of two 6-carbon sugars, possibly Glc or Gal.

The protein localises to the secreted. Functionally, may act as a carrier of hyaluronan in serum or as a binding protein between hyaluronan and other matrix protein, including those on cell surfaces in tissues to regulate the localization, synthesis and degradation of hyaluronan which are essential to cells undergoing biological processes. Its function is as follows. Contains a potential peptide which could stimulate a broad spectrum of phagocytotic cells. In Homo sapiens (Human), this protein is Inter-alpha-trypsin inhibitor heavy chain H1 (ITIH1).